The chain runs to 88 residues: Small ribosomal subunit protein uS19 (88 aa).

Belongs to the universal ribosomal protein uS19 family.

In terms of biological role, protein S19 forms a complex with S13 that binds strongly to the 16S ribosomal RNA. The sequence is that of Small ribosomal subunit protein uS19 from Chlamydia abortus (strain DSM 27085 / S26/3) (Chlamydophila abortus).